The following is a 160-amino-acid chain: Transcription elongation factor GreA (160 aa).

The stretch at 43 to 76 (LSENAEYDAAREQQRQLENKIGDLESKLTRATIL) forms a coiled coil.

This sequence belongs to the GreA/GreB family.

In terms of biological role, necessary for efficient RNA polymerase transcription elongation past template-encoded arresting sites. The arresting sites in DNA have the property of trapping a certain fraction of elongating RNA polymerases that pass through, resulting in locked ternary complexes. Cleavage of the nascent transcript by cleavage factors such as GreA or GreB allows the resumption of elongation from the new 3'terminus. GreA releases sequences of 2 to 3 nucleotides. This chain is Transcription elongation factor GreA, found in Chlorobium phaeobacteroides (strain BS1).